The chain runs to 153 residues: MLYYLIALFIIIADQLTKWLVVSHMELGQSIPVIDQVLYITSHRNTGAAWGILAGQMWFFYVITIAVIIGIVYYIQRYAKGQMLLGISLGLMLGGAAGNFIDRAARQEVVDFIHVIIVDYHYPIFNIADSSLCVGVILLFIHMLFDSGKKKEQ.

A run of 2 helical transmembrane segments spans residues 52–72 (ILAGQMWFFYVITIAVIIGIV) and 81–101 (GQMLLGISLGLMLGGAAGNFI). Catalysis depends on residues Asp111 and Asp129. A helical membrane pass occupies residues 124 to 144 (IFNIADSSLCVGVILLFIHML).

It belongs to the peptidase A8 family.

The protein localises to the cell membrane. The enzyme catalyses Release of signal peptides from bacterial membrane prolipoproteins. Hydrolyzes -Xaa-Yaa-Zaa-|-(S,diacylglyceryl)Cys-, in which Xaa is hydrophobic (preferably Leu), and Yaa (Ala or Ser) and Zaa (Gly or Ala) have small, neutral side chains.. It participates in protein modification; lipoprotein biosynthesis (signal peptide cleavage). This protein specifically catalyzes the removal of signal peptides from prolipoproteins. The chain is Lipoprotein signal peptidase from Bacillus velezensis (strain DSM 23117 / BGSC 10A6 / LMG 26770 / FZB42) (Bacillus amyloliquefaciens subsp. plantarum).